We begin with the raw amino-acid sequence, 200 residues long: LexA repressor (200 aa).

The segment at residues 28–48 (RAEIAQHFGFSSPNAAEQHLK) is a DNA-binding region (H-T-H motif). Active-site for autocatalytic cleavage activity residues include S117 and K154.

This sequence belongs to the peptidase S24 family. Homodimer.

The catalysed reaction is Hydrolysis of Ala-|-Gly bond in repressor LexA.. Functionally, represses a number of genes involved in the response to DNA damage (SOS response), including recA and lexA. In the presence of single-stranded DNA, RecA interacts with LexA causing an autocatalytic cleavage which disrupts the DNA-binding part of LexA, leading to derepression of the SOS regulon and eventually DNA repair. This is LexA repressor from Thiobacillus denitrificans (strain ATCC 25259 / T1).